Consider the following 81-residue polypeptide: Serine protease inhibitor Kazal-type 2 (81 aa).

A signal peptide spans methionine 1–leucine 21. Residues lysine 27 to cysteine 81 enclose the Kazal-like domain. 3 cysteine pairs are disulfide-bonded: cysteine 33–cysteine 63, cysteine 41–cysteine 60, and cysteine 49–cysteine 81.

In terms of tissue distribution, more abundant in epididymis than in testis.

The protein resides in the secreted. It is found in the cytoplasmic vesicle. The protein localises to the secretory vesicle. It localises to the acrosome. Functionally, strong inhibitor of acrosin in male and/or female genital tract. Also inhibits trypsin. Its function is as follows. As a strong inhibitor of acrosin, it is required for normal spermiogenesis. It probably hinders premature activation of proacrosin and other proteases, thus preventing the cascade of events leading to spermiogenesis defects. May be involved in the regulation of serine protease-dependent germ cell apoptosis. It also inhibits trypsin. In Macaca fascicularis (Crab-eating macaque), this protein is Serine protease inhibitor Kazal-type 2 (SPINK2).